Reading from the N-terminus, the 109-residue chain is uncharacterized protein (109 aa).

This is an uncharacterized protein from Homo sapiens (Human).